Reading from the N-terminus, the 956-residue chain is Calsyntenin-3 (956 aa).

The N-terminal stretch at methionine 1–cysteine 19 is a signal peptide. The Extracellular segment spans residues asparagine 20–alanine 847. 2 consecutive Cadherin domains span residues isoleucine 29–phenylalanine 145 and valine 146–tryptophan 246. Residues asparagine 299, asparagine 327, asparagine 347, asparagine 507, and asparagine 740 are each glycosylated (N-linked (GlcNAc...) asparagine). Residues alanine 848–valine 868 form a helical membrane-spanning segment. Topologically, residues arginine 869–tyrosine 956 are cytoplasmic. A disordered region spans residues alanine 917–tyrosine 956. Residues glutamine 927–valine 937 are compositionally biased toward acidic residues. Residues serine 943–tyrosine 956 show a composition bias toward basic and acidic residues.

This sequence belongs to the calsyntenin family. As to quaternary structure, interacts (via cadherin domains) with both alpha and beta isoforms of neurexins (NRXN1, NRXN2 and NRXN3). Directly interacts with APBA2. Forms a tripartite complex with APBA2 and APP. Interacts with low affinity with KLC1. Interacts with SLC23A2/SVCT2. Proteolytically processed under normal cellular conditions. A primary zeta-cleavage generates a large extracellular (soluble) N-terminal domain (sAlc) and a short C-terminal transmembrane fragment (CTF1). A secondary cleavage catalyzed by gamma-secretase within the transmembrane domain releases the beta-Alc-beta chain in the extracellular milieu and produces an intracellular fragment (AlcICD). This processing is strongly suppressed in the tripartite complex formed with APBA2 and APP, which seems to prevent the association with gamma-secretase.

The protein localises to the postsynaptic cell membrane. It localises to the endoplasmic reticulum membrane. Its subcellular location is the golgi apparatus membrane. It is found in the cell projection. The protein resides in the dendrite. Its function is as follows. Postsynaptic adhesion molecule that binds to presynaptic neurexins to mediate both excitatory and inhibitory synapse formation. Promotes synapse development by acting as a cell adhesion molecule at the postsynaptic membrane, which associates with both neurexin-alpha and neurexin-beta proteins at the presynaptic membrane. Regulates the balance between excitatory and inhibitory synapses by inhibiting formation of excitatory parallel-fiber synapses and promoting formation of inhibitory synapses in the same neuron. May also be involved in ascorbate (vitamin C) uptake via its interaction with SLC23A2/SVCT2. Complex formation with APBA2 and APP, stabilizes APP metabolism and enhances APBA2-mediated suppression of beta-APP40 secretion, due to the retardation of intracellular APP maturation. The protein is Calsyntenin-3 (CLSTN3) of Pongo abelii (Sumatran orangutan).